We begin with the raw amino-acid sequence, 152 residues long: Serglycin (152 aa).

The N-terminal stretch at 1–25 (MQVPVGSRLVLALAFVLVWGSSVQG) is a signal peptide. The propeptide at 26-74 (YPARRARYQWVRCKPNGFFANCIEEKGPQFDLIDESNNIGPPMNNPVLM) is activation peptide. Cysteine 38 and cysteine 47 are disulfide-bonded. The segment at 66 to 115 (PPMNNPVLMEGPSKDFISNYDDYGSGSGSGSGSGSGSGSGSGSGFLGDME) is disordered. Repeat copies occupy residues 89–90 (GS), 91–92 (GS), 93–94 (GS), 95–96 (GS), 97–98 (GS), 99–100 (GS), 101–102 (GS), 103–104 (GS), 105–106 (GS), and 107–108 (GS). Residues 89-108 (GSGSGSGSGSGSGSGSGSGS) form a 10 X 2 AA tandem repeats of G-S region. Residues 90-110 (SGSGSGSGSGSGSGSGSGSGF) are compositionally biased toward gly residues. Residues serine 92 and serine 94 are each glycosylated (O-linked (Xyl...) (glycosaminoglycan) serine). O-linked (Xyl...) (glycosaminoglycan) serine glycans are attached at residues serine 98, serine 100, serine 102, serine 104, serine 106, and serine 108.

This sequence belongs to the serglycin family. Binds to activated CD44 and to GZMB. Post-translationally, O-glycosylated; contains chondroitin sulfate and heparan sulfate.

It is found in the cytoplasmic granule. The protein resides in the cytolytic granule. Its subcellular location is the secreted. The protein localises to the extracellular space. It localises to the golgi apparatus. In terms of biological role, plays a role in formation of mast cell secretory granules and mediates storage of various compounds in secretory vesicles. Required for storage of some proteases in both connective tissue and mucosal mast cells and for storage of granzyme B in T-lymphocytes. Plays a role in localizing neutrophil elastase in azurophil granules of neutrophils. Mediates processing of MMP2. Plays a role in cytotoxic cell granule-mediated apoptosis by forming a complex with granzyme B which is delivered to cells by perforin to induce apoptosis. Regulates the secretion of TNF-alpha and may also regulate protease secretion. Inhibits bone mineralization. The sequence is that of Serglycin (Srgn) from Mus musculus (Mouse).